The primary structure comprises 1086 residues: MRGKWLRLCLAAVLIVSLLPGLGAGEWKASAAKAGDILLSHSFEEGTTQGWTARGGVKVDVTAEQAYQGKQSLQTTGRTEAWNGPSLSLTDVVHKNEVVEISGYVKLVAGSAPPDLKFTVERRDRNGDTQYDQVNAAEQVTDQKWVKLQGQYSYEQGSSLLLYLESTDAKAAYLLDEFQIRLVKAAPENPGEPGEAGQALFKAYFEDGNIGNWRARGTEKLEVVSGIGHNSNRSLKTSSRSETYHGPLVEVLPYLQKGSTVHISFWAMYDEGPATQVINGSLEKEFNRDTANLEYAMFASTTLNKGQWKKIEADIIVPAESTGISGLRMYAETPWKQSSEVTETDTIPFYVDDVQITATEAIAIEKNIPDLAKKLGSSYALGAAIDQTALDPKDPHSELLTKHFNSITAGNFMKMDAMQPTEGKFVWSEADKLVNFAAANNMQVRGHTLLWHSQVPDWFFTDPNDPSKPATREQLMQRMKTHIQTIVSRYKGKVHTWDVVNEVISDGGGLRNQASGSKWRDIIGDVDGDGDDSDYIELAFRYAREADPDAVLVINDYGIEGSVSKMNDMVKLVEKLLAKGTPIDAIGFQMHVSMYGPDIKQIREAFNRAAALGVHIQVTELDMSIYSGNSEQEKPVTDEMMLEQAYRYRALFDLFKEFDDRGVMDSVTLWGLADDGTWLDDFPVKGRKDAPLLFDRKLKAKPAYWALVDPSTLPVYRNEWTASQAKVSLPDRKGQEDIIWGAVRALPFSHVIEGAVGTTGEVKTLWDGKQLNLRIEVKDATRLKGDQVEVFVSPEDMTAGKKNSTPKDGQYIFNRDGGKGKDQKLYQVKENKSGYVVYASLPLSSADLAAGKVLSLDFRITDKQPNGKTSIVVWNDVNNQQPQKTENRGKLKLGFDLKHAKVMYGTPTVDGKEDKLWKKAVTITTDVKVTGNSGAKAKAKLLWDEKYLYVLAEVKDPLLSKKSANAHEQDSIELFIDLNKNQTNSYEEDDAQYRVNFDNETSFGGSPRKELFKSATRLTKEGYIVEAAIPLENVRTKESKWIGFDLQVNDDGAGDGKRSSVFMWSDPSGNSYRDTSGFGSLLLMKK.

An N-terminal signal peptide occupies residues 1–31 (MRGKWLRLCLAAVLIVSLLPGLGAGEWKASA). CBM-cenC domains follow at residues 35-183 (GDIL…IRLV) and 197-359 (GQAL…ITAT). Positions 365-710 (EKNIPDLAKK…KPAYWALVDP (346 aa)) constitute a GH10 domain. Catalysis depends on glutamate 502, which acts as the Proton donor. Aspartate 556 is an active-site residue. Glutamate 620 serves as the catalytic Nucleophile.

It belongs to the glycosyl hydrolase 10 (cellulase F) family.

The enzyme catalyses Endohydrolysis of (1-&gt;4)-beta-D-xylosidic linkages in xylans.. The protein operates within glycan degradation; xylan degradation. Functionally, endoxylanase with high hydrolytic activity on birchwood and oat spelt xylan. Xylotetraose, xylotriose, xylobiose and xylose are the main products from birchwood xylan hydrolysis. Shows increasing activity on xylo-oligosaccharides of increasing length. Displays very low hydrolytic activity on Avicel, carboxymethylcellulose (CMC) and p-nitrophenyl-beta-xylopyranoside. Also shows transxylosidase activity, allowing the formation of xylo-oligosaccharides of higher degree of polymerization than the starting substrate. This chain is Endo-1,4-beta-xylanase C (xynC), found in Paenibacillus barcinonensis.